We begin with the raw amino-acid sequence, 308 residues long: Cyclopropane mycolic acid synthase 2 (308 aa).

Residues 44-45 (YS), 79-87 (LLDIGCGWG), 105-110 (TLSANQ), and 137-138 (WE) each bind S-adenosyl-L-methionine. Cys290 is a catalytic residue.

This sequence belongs to the CFA/CMAS family. As to quaternary structure, homodimer.

Its subcellular location is the cytoplasm. It carries out the reaction a 1-acyl-2-(9Z)-enoyl-sn-glycero-3-phospholipid + S-adenosyl-L-methionine = a 1-acyl-2-(9-cyclopronane)-acyl-sn-glycero-3-phospholipid + S-adenosyl-L-homocysteine + H(+). Its pathway is lipid metabolism; mycolic acid biosynthesis. Catalyzes the formation of trans cyclopropanated ketomycolate or methoxymycolate through the conversion of a double bond to a cyclopropane ring at the proximal position of an oxygenated mycolic acid via the transfer of a methylene group from S-adenosyl-L-methionine. In the absence of MmaA2, CmaA2 has a non-specific cis-cyclopropanating activity and is able to catalyze the conversion of a double bond to a cis cyclopropane ring at the distal position of an alpha mycolic acid. Cyclopropanated mycolic acids are key factors participating in cell envelope permeability, host immunomodulation and persistence. In Mycobacterium leprae (strain TN), this protein is Cyclopropane mycolic acid synthase 2 (cmaA2).